A 452-amino-acid chain; its full sequence is UPF0210 protein Ccel_1722 (452 aa).

It belongs to the UPF0210 family. In terms of assembly, homodimer.

This chain is UPF0210 protein Ccel_1722, found in Ruminiclostridium cellulolyticum (strain ATCC 35319 / DSM 5812 / JCM 6584 / H10) (Clostridium cellulolyticum).